The sequence spans 368 residues: Protein-glutamate methylesterase/protein-glutamine glutaminase (368 aa).

The Response regulatory domain occupies 9 to 126 (KVLVVDDSAF…SINMKELKDE (118 aa)). Aspartate 60 is subject to 4-aspartylphosphate. In terms of domain architecture, CheB-type methylesterase spans 161–354 (SVPARIAVAI…ETVVKAVEII (194 aa)). Catalysis depends on residues serine 173, histidine 200, and aspartate 296.

The protein belongs to the CheB family. Post-translationally, phosphorylated by CheA. Phosphorylation of the N-terminal regulatory domain activates the methylesterase activity.

It localises to the cytoplasm. The catalysed reaction is [protein]-L-glutamate 5-O-methyl ester + H2O = L-glutamyl-[protein] + methanol + H(+). It carries out the reaction L-glutaminyl-[protein] + H2O = L-glutamyl-[protein] + NH4(+). In terms of biological role, involved in chemotaxis. Part of a chemotaxis signal transduction system that modulates chemotaxis in response to various stimuli. Catalyzes the demethylation of specific methylglutamate residues introduced into the chemoreceptors (methyl-accepting chemotaxis proteins or MCP) by CheR. Also mediates the irreversible deamidation of specific glutamine residues to glutamic acid. This is Protein-glutamate methylesterase/protein-glutamine glutaminase from Pyrococcus horikoshii (strain ATCC 700860 / DSM 12428 / JCM 9974 / NBRC 100139 / OT-3).